Consider the following 440-residue polypeptide: 3-phosphoshikimate 1-carboxyvinyltransferase (440 aa).

3-phosphoshikimate is bound by residues Lys-19, Ser-20, and Arg-24. Residue Lys-19 participates in phosphoenolpyruvate binding. Residues Gly-92 and Arg-121 each contribute to the phosphoenolpyruvate site. Residues Ser-166, Gln-168, Asp-315, and Lys-342 each contribute to the 3-phosphoshikimate site. Position 168 (Gln-168) interacts with phosphoenolpyruvate. Catalysis depends on Asp-315, which acts as the Proton acceptor. Phosphoenolpyruvate contacts are provided by Arg-346 and Arg-399.

Belongs to the EPSP synthase family. Monomer.

The protein localises to the cytoplasm. It catalyses the reaction 3-phosphoshikimate + phosphoenolpyruvate = 5-O-(1-carboxyvinyl)-3-phosphoshikimate + phosphate. Its pathway is metabolic intermediate biosynthesis; chorismate biosynthesis; chorismate from D-erythrose 4-phosphate and phosphoenolpyruvate: step 6/7. Functionally, catalyzes the transfer of the enolpyruvyl moiety of phosphoenolpyruvate (PEP) to the 5-hydroxyl of shikimate-3-phosphate (S3P) to produce enolpyruvyl shikimate-3-phosphate and inorganic phosphate. In Leptospira interrogans serogroup Icterohaemorrhagiae serovar copenhageni (strain Fiocruz L1-130), this protein is 3-phosphoshikimate 1-carboxyvinyltransferase.